We begin with the raw amino-acid sequence, 348 residues long: Nuclear receptor subfamily 1 group I member 3 (348 aa).

Residues 8–83 constitute a DNA-binding region (nuclear receptor); sequence PRSCMVCGDR…AGMKKEMILS (76 aa). The segment at 11-31 adopts an NR C4-type zinc-finger fold; it reads CMVCGDRATGYHFHALTCEGC. Thr38 carries the post-translational modification Phosphothreonine; by PKC. The NR C4-type zinc-finger motif lies at 47–71; that stretch reads CPFAGNCKVNKAQRRHCPACRLQKC. Positions 109–348 constitute an NR LBD domain; that stretch reads GQQELVQTLL…MMPLLQEICS (240 aa).

Belongs to the nuclear hormone receptor family. NR1 subfamily. Heterodimer of NR1I3 and RXR. Interacts with PSMC4. Interacts with ECT2. Directly interacts with DNAJC7; this complex may also include HSP90. Interacts with CRY1. Interacts with CRY2 in a ligand-dependent manner. Post-translationally, phosphorylated at Thr-38 by PKC, dephosphorylation of Thr-38 is required for nuclear translocation and activation.

The protein resides in the nucleus. It localises to the cytoplasm. It is found in the cytoskeleton. Binds and transactivates the retinoic acid response elements that control expression of the retinoic acid receptor beta 2 and alcohol dehydrogenase 3 genes. Transactivates both the phenobarbital responsive element module of the human CYP2B6 gene and the CYP3A4 xenobiotic response element. The sequence is that of Nuclear receptor subfamily 1 group I member 3 (NR1I3) from Callorhinus ursinus (Northern fur seal).